The sequence spans 342 residues: Holliday junction branch migration complex subunit RuvB (342 aa).

Positions 2–181 (TDNPLLSSAS…FGIPVRLQFY (180 aa)) are large ATPase domain (RuvB-L). Residues L20, R21, G62, K65, T66, T67, R171, Y181, and R218 each contribute to the ATP site. T66 is a Mg(2+) binding site. Residues 182-252 (SVEELERVVA…IADNALTRLE (71 aa)) form a small ATPAse domain (RuvB-S) region. Residues 255–342 (KIGLDLQDRR…QMPGLFGPDE (88 aa)) are head domain (RuvB-H). DNA contacts are provided by R291, R310, and R315.

Belongs to the RuvB family. Homohexamer. Forms an RuvA(8)-RuvB(12)-Holliday junction (HJ) complex. HJ DNA is sandwiched between 2 RuvA tetramers; dsDNA enters through RuvA and exits via RuvB. An RuvB hexamer assembles on each DNA strand where it exits the tetramer. Each RuvB hexamer is contacted by two RuvA subunits (via domain III) on 2 adjacent RuvB subunits; this complex drives branch migration. In the full resolvosome a probable DNA-RuvA(4)-RuvB(12)-RuvC(2) complex forms which resolves the HJ.

Its subcellular location is the cytoplasm. It carries out the reaction ATP + H2O = ADP + phosphate + H(+). In terms of biological role, the RuvA-RuvB-RuvC complex processes Holliday junction (HJ) DNA during genetic recombination and DNA repair, while the RuvA-RuvB complex plays an important role in the rescue of blocked DNA replication forks via replication fork reversal (RFR). RuvA specifically binds to HJ cruciform DNA, conferring on it an open structure. The RuvB hexamer acts as an ATP-dependent pump, pulling dsDNA into and through the RuvAB complex. RuvB forms 2 homohexamers on either side of HJ DNA bound by 1 or 2 RuvA tetramers; 4 subunits per hexamer contact DNA at a time. Coordinated motions by a converter formed by DNA-disengaged RuvB subunits stimulates ATP hydrolysis and nucleotide exchange. Immobilization of the converter enables RuvB to convert the ATP-contained energy into a lever motion, pulling 2 nucleotides of DNA out of the RuvA tetramer per ATP hydrolyzed, thus driving DNA branch migration. The RuvB motors rotate together with the DNA substrate, which together with the progressing nucleotide cycle form the mechanistic basis for DNA recombination by continuous HJ branch migration. Branch migration allows RuvC to scan DNA until it finds its consensus sequence, where it cleaves and resolves cruciform DNA. This chain is Holliday junction branch migration complex subunit RuvB, found in Novosphingobium aromaticivorans (strain ATCC 700278 / DSM 12444 / CCUG 56034 / CIP 105152 / NBRC 16084 / F199).